Reading from the N-terminus, the 475-residue chain is Dihydrolipoyl dehydrogenase (475 aa).

Residues 39 to 47, lysine 56, and alanine 118 contribute to the FAD site; that span reads EKDAYGGTC. Cysteines 47 and 52 form a disulfide. Residues 186-190, glutamate 209, and 275-278 contribute to the NAD(+) site; these read GGGYI and AVGR. FAD contacts are provided by aspartate 318 and alanine 327. The active-site Proton acceptor is histidine 451.

The protein belongs to the class-I pyridine nucleotide-disulfide oxidoreductase family. In terms of assembly, homodimer. It depends on FAD as a cofactor.

It localises to the cytoplasm. It catalyses the reaction N(6)-[(R)-dihydrolipoyl]-L-lysyl-[protein] + NAD(+) = N(6)-[(R)-lipoyl]-L-lysyl-[protein] + NADH + H(+). This chain is Dihydrolipoyl dehydrogenase (lpdA), found in Haloferax volcanii (strain ATCC 29605 / DSM 3757 / JCM 8879 / NBRC 14742 / NCIMB 2012 / VKM B-1768 / DS2) (Halobacterium volcanii).